The chain runs to 203 residues: ATP synthase subunit delta, chloroplastic (203 aa).

The protein belongs to the ATPase delta chain family. As to quaternary structure, F-type ATPases have 2 components, F(1) - the catalytic core - and F(0) - the membrane proton channel. F(1) has five subunits: alpha(3), beta(3), gamma(1), delta(1), epsilon(1). CF(0) has four main subunits: a(1), b(1), b'(1) and c(10-14). The alpha and beta chains form an alternating ring which encloses part of the gamma chain. F(1) is attached to F(0) by a central stalk formed by the gamma and epsilon chains, while a peripheral stalk is formed by the delta, b and b' chains.

It is found in the plastid. The protein localises to the chloroplast thylakoid membrane. F(1)F(0) ATP synthase produces ATP from ADP in the presence of a proton or sodium gradient. F-type ATPases consist of two structural domains, F(1) containing the extramembraneous catalytic core and F(0) containing the membrane proton channel, linked together by a central stalk and a peripheral stalk. During catalysis, ATP synthesis in the catalytic domain of F(1) is coupled via a rotary mechanism of the central stalk subunits to proton translocation. Its function is as follows. This protein is part of the stalk that links CF(0) to CF(1). It either transmits conformational changes from CF(0) to CF(1) or is implicated in proton conduction. In Heterosigma akashiwo (strain NIES-293 / 8280G21-1), this protein is ATP synthase subunit delta, chloroplastic.